A 160-amino-acid polypeptide reads, in one-letter code: 6,7-dimethyl-8-ribityllumazine synthase (160 aa).

Residues phenylalanine 22, 57–59, and 81–83 each bind 5-amino-6-(D-ribitylamino)uracil; these read TYE and TII. 86 to 87 provides a ligand contact to (2S)-2-hydroxy-3-oxobutyl phosphate; it reads QT. The active-site Proton donor is the histidine 89. A 5-amino-6-(D-ribitylamino)uracil-binding site is contributed by leucine 114. A (2S)-2-hydroxy-3-oxobutyl phosphate-binding site is contributed by arginine 128.

The protein belongs to the DMRL synthase family. Forms an icosahedral capsid composed of 60 subunits, arranged as a dodecamer of pentamers.

The catalysed reaction is (2S)-2-hydroxy-3-oxobutyl phosphate + 5-amino-6-(D-ribitylamino)uracil = 6,7-dimethyl-8-(1-D-ribityl)lumazine + phosphate + 2 H2O + H(+). The protein operates within cofactor biosynthesis; riboflavin biosynthesis; riboflavin from 2-hydroxy-3-oxobutyl phosphate and 5-amino-6-(D-ribitylamino)uracil: step 1/2. In terms of biological role, catalyzes the formation of 6,7-dimethyl-8-ribityllumazine by condensation of 5-amino-6-(D-ribitylamino)uracil with 3,4-dihydroxy-2-butanone 4-phosphate. This is the penultimate step in the biosynthesis of riboflavin. In Buchnera aphidicola subsp. Acyrthosiphon pisum (strain Tuc7), this protein is 6,7-dimethyl-8-ribityllumazine synthase.